Consider the following 280-residue polypeptide: C-type lectin domain family 1 member A (280 aa).

The disordered stretch occupies residues 1 to 44 (MQAKYSSTRDMLDDDGDTTMSLHSQGSATTRHPEPRRTEHRAPS). Residues 1 to 52 (MQAKYSSTRDMLDDDGDTTMSLHSQGSATTRHPEPRRTEHRAPSSTWRPVAL) are Cytoplasmic-facing. Positions 18–30 (TTMSLHSQGSATT) are enriched in polar residues. Residues 31–42 (RHPEPRRTEHRA) show a composition bias toward basic and acidic residues. A helical; Signal-anchor for type II membrane protein transmembrane segment spans residues 53 to 73 (TLLTLCLVLLIGLAALGLLFF). Over 74-280 (QYYQLSNTGQ…VPPETLGEGD (207 aa)) the chain is Extracellular. 2 N-linked (GlcNAc...) asparagine glycosylation sites follow: asparagine 95 and asparagine 169. In terms of domain architecture, C-type lectin spans 144–258 (HGDNCYQFYK…CKELKRCVCE (115 aa)). Intrachain disulfides connect cysteine 165–cysteine 257 and cysteine 236–cysteine 249.

Expressed preferentially in dendritic cells.

The protein resides in the membrane. This chain is C-type lectin domain family 1 member A (CLEC1A), found in Homo sapiens (Human).